A 243-amino-acid polypeptide reads, in one-letter code: Peptidyl-tRNA hydrolase (243 aa).

Tyr14 is a binding site for tRNA. His19 (proton acceptor) is an active-site residue. Positions 64, 66, and 112 each coordinate tRNA. The segment at 184 to 225 is disordered; the sequence is AAQTRPAEKAKPLATAKPKEGEARTSGGSVAEVGAPPPSPTG. A compositionally biased stretch (basic and acidic residues) spans 189 to 206; it reads PAEKAKPLATAKPKEGEA.

It belongs to the PTH family. As to quaternary structure, monomer.

It localises to the cytoplasm. It catalyses the reaction an N-acyl-L-alpha-aminoacyl-tRNA + H2O = an N-acyl-L-amino acid + a tRNA + H(+). Hydrolyzes ribosome-free peptidyl-tRNAs (with 1 or more amino acids incorporated), which drop off the ribosome during protein synthesis, or as a result of ribosome stalling. Its function is as follows. Catalyzes the release of premature peptidyl moieties from peptidyl-tRNA molecules trapped in stalled 50S ribosomal subunits, and thus maintains levels of free tRNAs and 50S ribosomes. This is Peptidyl-tRNA hydrolase from Rhodospirillum rubrum (strain ATCC 11170 / ATH 1.1.1 / DSM 467 / LMG 4362 / NCIMB 8255 / S1).